We begin with the raw amino-acid sequence, 635 residues long: Extracellular metalloproteinase mep (635 aa).

The signal sequence occupies residues 1–19 (MMRGLLLAGALGLPLAVLA). Positions 20–246 (HPTHHAHGLQ…VHGVVDYVAE (227 aa)) are excised as a propeptide. Asn287 carries N-linked (GlcNAc...) asparagine glycosylation. A compositionally biased stretch (polar residues) spans 290-309 (TTRGNNGIAQSNPTGGSQYL). A disordered region spans residues 290–311 (TTRGNNGIAQSNPTGGSQYLKN). His430 serves as a coordination point for Zn(2+). Glu431 is an active-site residue. A Zn(2+)-binding site is contributed by His434.

The protein belongs to the peptidase M36 family. Zn(2+) serves as cofactor.

Its subcellular location is the secreted. Functionally, secreted metalloproteinase that allows assimilation of proteinaceous substrates. This is Extracellular metalloproteinase mep (mep) from Aspergillus flavus (strain ATCC 200026 / FGSC A1120 / IAM 13836 / NRRL 3357 / JCM 12722 / SRRC 167).